We begin with the raw amino-acid sequence, 259 residues long: Ribosomal RNA small subunit methyltransferase J (259 aa).

Residues 109–110 (RD), 125–126 (ER), 161–162 (SS), and Asp-179 each bind S-adenosyl-L-methionine.

It belongs to the methyltransferase superfamily. RsmJ family.

It localises to the cytoplasm. It catalyses the reaction guanosine(1516) in 16S rRNA + S-adenosyl-L-methionine = N(2)-methylguanosine(1516) in 16S rRNA + S-adenosyl-L-homocysteine + H(+). In terms of biological role, specifically methylates the guanosine in position 1516 of 16S rRNA. This is Ribosomal RNA small subunit methyltransferase J from Shewanella putrefaciens (strain CN-32 / ATCC BAA-453).